The sequence spans 482 residues: Coagulation factor X (482 aa).

The first 20 residues, Met-1–Pro-20, serve as a signal peptide directing secretion. The propeptide occupies Gly-21 to Arg-40. Residues Ala-41 to Glu-85 form the Gla domain. Glu-46, Glu-47, Glu-54, Glu-56, Glu-59, Glu-60, Glu-65, Glu-66, Glu-69, Glu-72, Glu-75, and Glu-79 each carry 4-carboxyglutamate. A disulfide bridge links Cys-57 with Cys-62. An EGF-like 1; calcium-binding domain is found at Asp-86–Glu-122. 11 cysteine pairs are disulfide-bonded: Cys-90–Cys-101, Cys-95–Cys-110, Cys-112–Cys-121, Cys-129–Cys-140, Cys-136–Cys-149, Cys-151–Cys-164, Cys-172–Cys-340, Cys-238–Cys-243, Cys-259–Cys-275, Cys-388–Cys-402, and Cys-413–Cys-441. A (3R)-3-hydroxyaspartate modification is found at Asp-103. The EGF-like 2 domain maps to Val-125–Leu-165. A propeptide spans Val-184 to Arg-231 (activation peptide). N-linked (GlcNAc...) asparagine glycosylation is found at Asn-187 and Asn-218. In terms of domain architecture, Peptidase S1 spans Ile-232 to Lys-465. Catalysis depends on charge relay system residues His-274 and Asp-320. Ser-417 serves as the catalytic Charge relay system.

The protein belongs to the peptidase S1 family. In terms of assembly, the two chains are formed from a single-chain precursor by the excision of two Arg residues and are held together by 1 or more disulfide bonds. Forms a heterodimer with SERPINA5. Interacts with ixolaris, an anticoagulant protein from Ixodes scapularis saliva. The vitamin K-dependent, enzymatic carboxylation of some glutamate residues allows the modified protein to bind calcium. In terms of processing, N- and O-glycosylated. Post-translationally, proteolytically cleaved and activated by cathepsin CTSG. The activation peptide is cleaved by factor IXa (in the intrinsic pathway), or by factor VIIa (in the extrinsic pathway). The iron and 2-oxoglutarate dependent 3-hydroxylation of aspartate and asparagine is (R) stereospecific within EGF domains. In terms of tissue distribution, plasma; synthesized in the liver.

It is found in the secreted. The enzyme catalyses Selective cleavage of Arg-|-Thr and then Arg-|-Ile bonds in prothrombin to form thrombin.. Inhibited by SERPINA5. In terms of biological role, factor Xa is a vitamin K-dependent glycoprotein that converts prothrombin to thrombin in the presence of factor Va, calcium and phospholipid during blood clotting. Factor Xa activates pro-inflammatory signaling pathways in a protease-activated receptor (PAR)-dependent manner. The protein is Coagulation factor X (F10) of Rattus norvegicus (Rat).